The sequence spans 490 residues: Betaine aldehyde dehydrogenase (490 aa).

Aspartate 93 lines the K(+) pocket. 150–152 (GAW) provides a ligand contact to NAD(+). Lysine 162 serves as the catalytic Charge relay system. Position 176–179 (176–179 (KPSE)) interacts with NAD(+). Valine 180 provides a ligand contact to K(+). Position 230–233 (230–233 (GIAS)) interacts with NAD(+). Leucine 246 is a binding site for K(+). The active-site Proton acceptor is the glutamate 252. Residues glycine 254, cysteine 286, and glutamate 387 each coordinate NAD(+). Cysteine 286 acts as the Nucleophile in catalysis. Position 286 is a cysteine sulfenic acid (-SOH) (cysteine 286). K(+) contacts are provided by lysine 457 and glycine 460. Glutamate 464 functions as the Charge relay system in the catalytic mechanism.

Belongs to the aldehyde dehydrogenase family. In terms of assembly, dimer of dimers. The cofactor is K(+).

It carries out the reaction betaine aldehyde + NAD(+) + H2O = glycine betaine + NADH + 2 H(+). It functions in the pathway amine and polyamine biosynthesis; betaine biosynthesis via choline pathway; betaine from betaine aldehyde: step 1/1. Involved in the biosynthesis of the osmoprotectant glycine betaine. Catalyzes the irreversible oxidation of betaine aldehyde to the corresponding acid. In Yersinia pseudotuberculosis serotype O:3 (strain YPIII), this protein is Betaine aldehyde dehydrogenase.